Consider the following 342-residue polypeptide: Protein-glutamate methylesterase/protein-glutamine glutaminase 1 (342 aa).

Residues 2 to 119 (RVAIVNDMPL…GDPKAAAQRL (118 aa)) form the Response regulatory domain. Aspartate 53 is modified (4-aspartylphosphate). The region spanning 146-329 (SDTDAALVVI…LPLGDIAPRL (184 aa)) is the CheB-type methylesterase domain. Active-site residues include serine 158, histidine 185, and aspartate 278.

The protein belongs to the CheB family. Phosphorylated by CheA. Phosphorylation of the N-terminal regulatory domain activates the methylesterase activity.

It localises to the cytoplasm. The enzyme catalyses [protein]-L-glutamate 5-O-methyl ester + H2O = L-glutamyl-[protein] + methanol + H(+). It catalyses the reaction L-glutaminyl-[protein] + H2O = L-glutamyl-[protein] + NH4(+). Functionally, involved in chemotaxis. Part of a chemotaxis signal transduction system that modulates chemotaxis in response to various stimuli. Catalyzes the demethylation of specific methylglutamate residues introduced into the chemoreceptors (methyl-accepting chemotaxis proteins or MCP) by CheR. Also mediates the irreversible deamidation of specific glutamine residues to glutamic acid. This is Protein-glutamate methylesterase/protein-glutamine glutaminase 1 from Bordetella avium (strain 197N).